Consider the following 160-residue polypeptide: Cell division protein SepF (160 aa).

The segment covering A18 to T30 has biased composition (acidic residues). Residues A18–I72 are disordered. The segment covering P45–P57 has biased composition (low complexity).

This sequence belongs to the SepF family. As to quaternary structure, homodimer. Interacts with FtsZ.

The protein localises to the cytoplasm. Functionally, cell division protein that is part of the divisome complex and is recruited early to the Z-ring. Probably stimulates Z-ring formation, perhaps through the cross-linking of FtsZ protofilaments. Its function overlaps with FtsA. The sequence is that of Cell division protein SepF from Bifidobacterium adolescentis (strain ATCC 15703 / DSM 20083 / NCTC 11814 / E194a).